The primary structure comprises 91 residues: Small ribosomal subunit protein uS19 (91 aa).

The protein belongs to the universal ribosomal protein uS19 family.

Protein S19 forms a complex with S13 that binds strongly to the 16S ribosomal RNA. This chain is Small ribosomal subunit protein uS19, found in Pseudomonas syringae pv. syringae (strain B728a).